The primary structure comprises 255 residues: tRNA (guanine-N(1)-)-methyltransferase (255 aa).

Residues Gly-113 and 133–138 (IGDYVL) contribute to the S-adenosyl-L-methionine site.

This sequence belongs to the RNA methyltransferase TrmD family. As to quaternary structure, homodimer.

It is found in the cytoplasm. It catalyses the reaction guanosine(37) in tRNA + S-adenosyl-L-methionine = N(1)-methylguanosine(37) in tRNA + S-adenosyl-L-homocysteine + H(+). Functionally, specifically methylates guanosine-37 in various tRNAs. This is tRNA (guanine-N(1)-)-methyltransferase from Salmonella agona (strain SL483).